We begin with the raw amino-acid sequence, 927 residues long: MAKVRELEEAFVQEQPSPQLPSEIAEECCAQLLGKGLLVYPEDSAYLLAETAAGARSSGEKGGDPGLQVGVKSEMQLNNGNFSSEEEDADTQESKTKAADPQLSQKKSITQMMKDKKKQTQLTLQWLEDNYIVCEGVCLPRCILYAHYLDFCRKEKLEPACAATFGKTIRQKFPLLTTRRLGTRGHSKYHYYGIGIKESSAYYHSVYSGKGLTRFSGSKLKNEGGFTRKYSLSSKTGTLLPEFPSAQHLVYQGCISKDKVDTLIMMYKTHCQCILDNAINGNFEEIQHFLLHFWQGMPDHLLPLLENPVIIDIFCVCDSILYKVLTDVLIPATMQEMPESLLADIRNFAKNWEQWVVSSLENLPEALIDKKIPILRRFVSSLKRQTSFLHLAQIARPALFDQHVVNAMVSDIEKVDLNSIGSQALLTISNSTDTESDIYSEHDSITVFQELKDLLKKNATVEAFIEWLDTVVEQRVIKMSKQNGRSLKKRAQDFLLKWSFFGARVMHNLTLNNASSFGSFHLIRMLLDEYILLAMETQFNNDKEQELQNLLDKYMKNSDASKAAFTASPSSCFLANRNKASSLASDTVKNESHVETSYVPLPSSQPGAIPPALHPFSTEDTDNMPLPGQIELSQSTGHLMTPPISPAIASRGSVINQGPMASRPPSVGTVLSAPTHCSTYAEPIYPTLSPANHDFYGTNSNYQTMFRTQSHPASSLYAHRAEHGRCMAWTEQQLSRDFFGGSCAGSPYNCRPPSSYGPSTHTQESHSMQVLNTGSFNFLSNAGAGSCQGSTLPSNSPNGYYGNNINYSEAHRLGSMVNQHVSVISSVRSLPPYSDIHDPLNILDDSSRKQNNSFYADTLSPVACRTTVVASNLQTQIPSSSSQCMYGTSNQYPVQDSLDSNAASNREMVSSLPPINTVFMGTAAGDT.

2 disordered regions span residues 1-21 (MAKVRELEEAFVQEQPSPQLP) and 81-108 (NFSSEEEDADTQESKTKAADPQLSQKKS). A DNA-binding region (RFX-type winged-helix) is located at residues 123 to 198 (TLQWLEDNYI…YHYYGIGIKE (76 aa)).

It belongs to the RFX family. As to quaternary structure, interacts with RFX3. In the adult pancreas, expression is restricted to the islets where it could be detected in all endocrine lineages.

The protein localises to the nucleus. Functionally, transcription factor required to direct islet cell differentiation during endocrine pancreas development. Specifically required for the differentiation of 4 of the 5 islet cell types and for the production of insulin. Not required for pancreatic PP (polypeptide-producing) cells differentiation. Acts downstream of NEUROG3 and regulates the transcription factors involved in beta-cell maturation and function, thereby restricting the expression of the beta-cell differentiation and specification genes, and thus the beta-cell fate choice. Activates transcription by forming a heterodimer with RFX3 and binding to the X-box in the promoter of target genes. Involved in glucose-stimulated insulin secretion by promoting insulin and L-type calcium channel gene transcription. This chain is DNA-binding protein RFX6 (Rfx6), found in Mus musculus (Mouse).